Consider the following 241-residue polypeptide: Small ribosomal subunit protein uS3 (241 aa).

A KH type-2 domain is found at 22–91; sequence VDEYLAYKFH…NPQVTVVKVE (70 aa). The interval 218 to 241 is disordered; it reads EMQQTQPEAPTLEETVEQSGGETQ.

It belongs to the universal ribosomal protein uS3 family. As to quaternary structure, part of the 30S ribosomal subunit.

Functionally, binds the lower part of the 30S subunit head. This is Small ribosomal subunit protein uS3 from Ignicoccus hospitalis (strain KIN4/I / DSM 18386 / JCM 14125).